A 628-amino-acid polypeptide reads, in one-letter code: tRNA uridine 5-carboxymethylaminomethyl modification enzyme MnmG (628 aa).

13–18 (GAGHAG) is a binding site for FAD. 273–287 (GPRYCPSIEDKIVRF) lines the NAD(+) pocket.

The protein belongs to the MnmG family. As to quaternary structure, homodimer. Heterotetramer of two MnmE and two MnmG subunits. Requires FAD as cofactor.

Its subcellular location is the cytoplasm. Functionally, NAD-binding protein involved in the addition of a carboxymethylaminomethyl (cmnm) group at the wobble position (U34) of certain tRNAs, forming tRNA-cmnm(5)s(2)U34. This chain is tRNA uridine 5-carboxymethylaminomethyl modification enzyme MnmG, found in Buchnera aphidicola subsp. Acyrthosiphon pisum (strain APS) (Acyrthosiphon pisum symbiotic bacterium).